The primary structure comprises 456 residues: IQ domain-containing protein IQM3 (456 aa).

An IQ domain is found at 46–75 (TRLAAVKVQKVYRSYRTRRRLADSVVVAEE). The tract at residues 315-358 (SEDSDSYDDYVKSNGGSEPEPLKKEDTTFQAETETDENGNGTVG) is disordered.

Expressed in roots, rosette and cauline leaves, flowers and siliques, and at lower levels in stems.

The protein localises to the cytoplasm. It is found in the nucleus. Its function is as follows. May be involved in biotic and abiotic stress responses. The polypeptide is IQ domain-containing protein IQM3 (Arabidopsis thaliana (Mouse-ear cress)).